The chain runs to 295 residues: Foldase protein PrsA (295 aa).

Positions 1-19 (MKKVLIGFASIAMAFTLAA) are cleaved as a signal peptide. A lipid anchor (N-palmitoyl cysteine) is attached at Cys-20. Residue Cys-20 is the site of S-diacylglycerol cysteine attachment. The PpiC domain occupies 136–229 (EPKVTVAQIL…YGYQVIKMIN (94 aa)).

Belongs to the PrsA family.

Its subcellular location is the cell membrane. It catalyses the reaction [protein]-peptidylproline (omega=180) = [protein]-peptidylproline (omega=0). In terms of biological role, plays a major role in protein secretion by helping the post-translocational extracellular folding of several secreted proteins. The sequence is that of Foldase protein PrsA from Pediococcus pentosaceus (strain ATCC 25745 / CCUG 21536 / LMG 10740 / 183-1w).